A 320-amino-acid chain; its full sequence is ATP-dependent 6-phosphofructokinase isozyme 1 (320 aa).

Gly-12 lines the ATP pocket. Residues 22–26 and 55–60 contribute to the ADP site; these read RGVVR and RYSVSD. ATP is bound by residues 73–74 and 103–106; these read RF and GDGS. Residue Asp-104 coordinates Mg(2+). Substrate is bound at residue 126–128; the sequence is TID. Residue Asp-128 is the Proton acceptor of the active site. Position 155 (Arg-155) interacts with ADP. Residues Arg-163 and 170 to 172 each bind substrate; that span reads MGR. Residues 186-188, Lys-212, and 214-216 contribute to the ADP site; these read GCE and KKH. Substrate-binding positions include Glu-223, Arg-244, and 250-253; that span reads HIQR.

The protein belongs to the phosphofructokinase type A (PFKA) family. ATP-dependent PFK group I subfamily. Prokaryotic clade 'B1' sub-subfamily. In terms of assembly, homotetramer. Requires Mg(2+) as cofactor.

It localises to the cytoplasm. The enzyme catalyses beta-D-fructose 6-phosphate + ATP = beta-D-fructose 1,6-bisphosphate + ADP + H(+). The protein operates within carbohydrate degradation; glycolysis; D-glyceraldehyde 3-phosphate and glycerone phosphate from D-glucose: step 3/4. With respect to regulation, allosterically activated by ADP and other diphosphonucleosides, and allosterically inhibited by phosphoenolpyruvate. In terms of biological role, catalyzes the phosphorylation of D-fructose 6-phosphate to fructose 1,6-bisphosphate by ATP, the first committing step of glycolysis. The chain is ATP-dependent 6-phosphofructokinase isozyme 1 from Escherichia coli O6:H1 (strain CFT073 / ATCC 700928 / UPEC).